The following is a 638-amino-acid chain: Phenylethylamine oxidase (638 aa).

Positions 1–2 (MT) are excised as a propeptide. 296 to 307 (YFDTGEYLVGQY) provides a ligand contact to substrate. The active-site Proton acceptor is the aspartate 298. Residues cysteine 317 and cysteine 343 are joined by a disulfide bond. 379–384 (IGNYDY) contacts substrate. Tyrosine 382 functions as the Schiff-base intermediate with substrate; via topaquinone in the catalytic mechanism. Tyrosine 382 carries the 2',4',5'-topaquinone modification. Residues histidine 431, histidine 433, and histidine 592 each contribute to the Cu cation site.

It belongs to the copper/topaquinone oxidase family. As to quaternary structure, homodimer. It depends on Cu cation as a cofactor. L-topaquinone serves as cofactor. Topaquinone (TPQ) is generated by copper-dependent autoxidation of a specific tyrosyl residue.

The enzyme catalyses a primary methyl amine + O2 + H2O = an aldehyde + H2O2 + NH4(+). It carries out the reaction 2-phenylethylamine + O2 + H2O = 2-phenylacetaldehyde + H2O2 + NH4(+). In terms of biological role, catalyzes the oxidative deamination of phenylethylamine to phenylacetaldehyde with the concomitant production of hydrogen peroxide and ammonia. The protein is Phenylethylamine oxidase of Arthrobacter globiformis.